Here is a 209-residue protein sequence, read N- to C-terminus: Chaperone protein TorD (209 aa).

It belongs to the TorD/DmsD family. TorD subfamily.

The protein localises to the cytoplasm. In terms of biological role, involved in the biogenesis of TorA. Acts on TorA before the insertion of the molybdenum cofactor and, as a result, probably favors a conformation of the apoenzyme that is competent for acquiring the cofactor. This chain is Chaperone protein TorD, found in Shewanella sp. (strain MR-4).